A 216-amino-acid polypeptide reads, in one-letter code: Uracil phosphoribosyltransferase (216 aa).

Residues 29–30 and Arg37 each bind CTP; that span reads RK. Position 30–34 (30–34) interacts with GTP; it reads KNLVR. Arg80 serves as a coordination point for 5-phospho-alpha-D-ribose 1-diphosphate. 87-96 contributes to the CTP binding site; that stretch reads EGLLKAFPKA. Residues Arg105 and 140–148 each bind 5-phospho-alpha-D-ribose 1-diphosphate; that span reads DPMIATAST. Uracil is bound by residues Ile203 and 208 to 210; that span reads GDA. Asp209 serves as a coordination point for 5-phospho-alpha-D-ribose 1-diphosphate.

The protein belongs to the UPRTase family. Homotetramer. The cofactor is Mg(2+).

The catalysed reaction is UMP + diphosphate = 5-phospho-alpha-D-ribose 1-diphosphate + uracil. It participates in pyrimidine metabolism; UMP biosynthesis via salvage pathway; UMP from uracil: step 1/1. With respect to regulation, allosterically activated by GTP. Inhibited by CTP and UMP in combination. Catalyzes the conversion of uracil and 5-phospho-alpha-D-ribose 1-diphosphate (PRPP) to UMP and diphosphate. The polypeptide is Uracil phosphoribosyltransferase (upp) (Saccharolobus solfataricus (strain ATCC 35092 / DSM 1617 / JCM 11322 / P2) (Sulfolobus solfataricus)).